Here is a 128-residue protein sequence, read N- to C-terminus: Modulator protein MzrA (128 aa).

Over Met1–Val13 the chain is Cytoplasmic. The chain crosses the membrane as a helical span at residues Leu14–Phe34. Topologically, residues Arg35–Gly128 are periplasmic.

This sequence belongs to the MzrA family. Interacts with EnvZ.

The protein resides in the cell inner membrane. Modulates the activity of the EnvZ/OmpR two-component regulatory system, probably by directly modulating EnvZ enzymatic activity and increasing stability of phosphorylated OmpR. In Erwinia billingiae (strain Eb661), this protein is Modulator protein MzrA.